The primary structure comprises 183 residues: SAYSvFN domain-containing protein 1 (183 aa).

The Cytoplasmic portion of the chain corresponds to 1–105 (MEQRLAEFRA…SFLTNITFLK (105 aa)). Residues 11 to 36 (ARKRAGLAAQPPAASQGAQTPGEKAE) are disordered. Residues 16-36 (GLAAQPPAASQGAQTPGEKAE) show a composition bias toward low complexity. Residues 91–105 (SCWDQSFLTNITFLK) are middle helical (MH). The segment at residues 106-126 (VLLWLVLLGLFVELEFGLAYF) is an intramembrane region (helical). At 127-183 (VLSLFYWMYVGTRGPEEKKEGEKSAYSVFNPGCEAIQGTLTAEQLERELQLRPLAGR) the chain is on the cytoplasmic side.

It belongs to the SAYSD1 family. As to quaternary structure, associates (via N-terminus) with ribosomes.

It is found in the endoplasmic reticulum membrane. The protein resides in the cytoplasmic vesicle membrane. Functionally, ufmylation 'reader' component of a translocation-associated quality control pathway, a mechanism that takes place when a ribosome has stalled during translation, and which is required to degrade clogged substrates. Specifically recognizes and binds ufmylated ribosomes when a ribosome has stalled, promoting the transport of stalled nascent chain via the TRAPP complex to lysosomes for degradation. This Homo sapiens (Human) protein is SAYSvFN domain-containing protein 1.